A 1125-amino-acid chain; its full sequence is Transcription-repair-coupling factor (1125 aa).

The Helicase ATP-binding domain occupies 597-758 (DMMSFKVMDR…LIKLRDISVL (162 aa)). 610–617 (GDVGFGKT) provides a ligand contact to ATP. Positions 711–714 (DEEQ) match the DEEQ box motif. One can recognise a Helicase C-terminal domain in the interval 774 to 933 (SFSELLIKHA…GFKIAMKDME (160 aa)).

The protein in the N-terminal section; belongs to the UvrB family. It in the C-terminal section; belongs to the helicase family. RecG subfamily.

The protein resides in the cytoplasm. In terms of biological role, couples transcription and DNA repair by recognizing RNA polymerase (RNAP) stalled at DNA lesions. Mediates ATP-dependent release of RNAP and its truncated transcript from the DNA, and recruitment of nucleotide excision repair machinery to the damaged site. The protein is Transcription-repair-coupling factor of Borreliella burgdorferi (strain ATCC 35210 / DSM 4680 / CIP 102532 / B31) (Borrelia burgdorferi).